The sequence spans 889 residues: Protein argonaute 15 (889 aa).

Disordered stretches follow at residues 1–26 (MESH…SRKG) and 119–150 (EDAS…RMKR). The segment covering 122–132 (SSSGRTTTRRS) has biased composition (low complexity). Positions 264 to 379 (PVIEFLLFNQ…IPLELCHLVP (116 aa)) constitute a PAZ domain. A Piwi domain is found at 546 to 853 (FVLCVLPERK…AAAQVSQFVR (308 aa)). Residues 857–878 (AASEGSGDGGAPPRPVPELPRL) form a disordered region.

The protein belongs to the argonaute family. Ago subfamily.

In terms of biological role, probably involved in the RNA silencing pathway. May bind to short RNAs such as microRNAs (miRNAs) or short interfering RNAs (siRNAs), and represses the translation of mRNAs which are complementary to them. This Oryza sativa subsp. japonica (Rice) protein is Protein argonaute 15 (AGO15).